A 411-amino-acid polypeptide reads, in one-letter code: Tyrosine--tRNA ligase (411 aa).

Residue Tyr34 coordinates L-tyrosine. The 'HIGH' region signature appears at 39 to 48; sequence CTATSLHIGS. The L-tyrosine site is built by Tyr171 and Gln175. The 'KMSKS' region motif lies at 231-235; that stretch reads KMGKT. An ATP-binding site is contributed by Lys234. The 67-residue stretch at 345–411 folds into the S4 RNA-binding domain; it reads ISAYELFYEA…GKKRHILVRV (67 aa).

It belongs to the class-I aminoacyl-tRNA synthetase family. TyrS type 1 subfamily. In terms of assembly, homodimer.

It localises to the cytoplasm. It catalyses the reaction tRNA(Tyr) + L-tyrosine + ATP = L-tyrosyl-tRNA(Tyr) + AMP + diphosphate + H(+). Catalyzes the attachment of tyrosine to tRNA(Tyr) in a two-step reaction: tyrosine is first activated by ATP to form Tyr-AMP and then transferred to the acceptor end of tRNA(Tyr). The protein is Tyrosine--tRNA ligase of Rickettsia rickettsii (strain Sheila Smith).